A 178-amino-acid chain; its full sequence is Inorganic pyrophosphatase (178 aa).

Residues Lys-30, Arg-44, and Tyr-56 each contribute to the substrate site. Residues Asp-66, Asp-71, and Asp-103 each coordinate Mg(2+). Position 142 (Tyr-142) interacts with substrate.

The protein belongs to the PPase family. As to quaternary structure, homohexamer. Mg(2+) is required as a cofactor.

It is found in the cytoplasm. It carries out the reaction diphosphate + H2O = 2 phosphate + H(+). Its function is as follows. Catalyzes the hydrolysis of inorganic pyrophosphate (PPi) forming two phosphate ions. This is Inorganic pyrophosphatase from Xylella fastidiosa (strain 9a5c).